The following is a 314-amino-acid chain: tRNA-cytidine(32) 2-sulfurtransferase (314 aa).

The short motif at 49-54 (SGGKDS) is the PP-loop motif element. Cys124, Cys127, and Cys215 together coordinate [4Fe-4S] cluster.

The protein belongs to the TtcA family. Homodimer. Mg(2+) is required as a cofactor. The cofactor is [4Fe-4S] cluster.

Its subcellular location is the cytoplasm. The enzyme catalyses cytidine(32) in tRNA + S-sulfanyl-L-cysteinyl-[cysteine desulfurase] + AH2 + ATP = 2-thiocytidine(32) in tRNA + L-cysteinyl-[cysteine desulfurase] + A + AMP + diphosphate + H(+). The protein operates within tRNA modification. In terms of biological role, catalyzes the ATP-dependent 2-thiolation of cytidine in position 32 of tRNA, to form 2-thiocytidine (s(2)C32). The sulfur atoms are provided by the cysteine/cysteine desulfurase (IscS) system. This Histophilus somni (strain 129Pt) (Haemophilus somnus) protein is tRNA-cytidine(32) 2-sulfurtransferase.